Consider the following 43-residue polypeptide: Omega-ctenitoxin-Pr1a (43 aa).

Disulfide bonds link Cys-2/Cys-17, Cys-9/Cys-22, Cys-16/Cys-33, and Cys-24/Cys-31. Glycine amide is present on Gly-43.

Expressed by the venom gland.

Its subcellular location is the secreted. Inhibits high-voltage activated calcium channels. Shifts the voltage-dependence for activation towards hyperpolarized membrane potentials for L- (Cav1), P/Q- (Cav2.1/CACNA1A) and R-type (Cav2.3/CACNA1E) calcium currents. Causes immediate agitation and clockwise gyration, followed by the gradual development of general flaccid paralysis when injected intracerebroventricular into mice at dose levels of 5 ug per mouse. The chain is Omega-ctenitoxin-Pr1a from Phoneutria reidyi (Brazilian Amazonian armed spider).